The sequence spans 388 residues: 4-hydroxy-3-methylbut-2-en-1-yl diphosphate synthase (flavodoxin) (388 aa).

[4Fe-4S] cluster contacts are provided by Cys281, Cys284, Cys316, and Glu323.

This sequence belongs to the IspG family. It depends on [4Fe-4S] cluster as a cofactor.

It carries out the reaction (2E)-4-hydroxy-3-methylbut-2-enyl diphosphate + oxidized [flavodoxin] + H2O + 2 H(+) = 2-C-methyl-D-erythritol 2,4-cyclic diphosphate + reduced [flavodoxin]. It functions in the pathway isoprenoid biosynthesis; isopentenyl diphosphate biosynthesis via DXP pathway; isopentenyl diphosphate from 1-deoxy-D-xylulose 5-phosphate: step 5/6. Converts 2C-methyl-D-erythritol 2,4-cyclodiphosphate (ME-2,4cPP) into 1-hydroxy-2-methyl-2-(E)-butenyl 4-diphosphate. This chain is 4-hydroxy-3-methylbut-2-en-1-yl diphosphate synthase (flavodoxin), found in Paenarthrobacter aurescens (strain TC1).